We begin with the raw amino-acid sequence, 778 residues long: Glutathione biosynthesis bifunctional protein GshAB (778 aa).

Residues 1 to 354 (MVNLDKGLLK…EEFFKNHDMV (354 aa)) form a glutamate--cysteine ligase region. The ATP-grasp domain occupies 521-777 (KDILRENNIR…AGEKILDLLF (257 aa)). 548–606 (RLFKDEKIVIKPKSTNFGLGISIFPGEYSREDYDKAVEIAFREDSSILIEEFMTGKEYR) serves as a coordination point for ATP. Asp728, Glu747, and Asn749 together coordinate Mg(2+). Positions 728, 747, and 749 each coordinate Mn(2+).

In the N-terminal section; belongs to the glutamate--cysteine ligase type 1 family. Type 2 subfamily. Monomer. Mg(2+) serves as cofactor. The cofactor is Mn(2+).

It catalyses the reaction L-cysteine + L-glutamate + ATP = gamma-L-glutamyl-L-cysteine + ADP + phosphate + H(+). It carries out the reaction gamma-L-glutamyl-L-cysteine + glycine + ATP = glutathione + ADP + phosphate + H(+). It participates in sulfur metabolism; glutathione biosynthesis; glutathione from L-cysteine and L-glutamate: step 1/2. It functions in the pathway sulfur metabolism; glutathione biosynthesis; glutathione from L-cysteine and L-glutamate: step 2/2. In terms of biological role, synthesizes glutathione from L-glutamate and L-cysteine via gamma-L-glutamyl-L-cysteine. This is Glutathione biosynthesis bifunctional protein GshAB from Clostridium perfringens (strain 13 / Type A).